We begin with the raw amino-acid sequence, 617 residues long: V-type proton ATPase catalytic subunit A (617 aa).

Position 136 is a phosphothreonine (T136). 250–257 (GAFGCGKT) serves as a coordination point for ATP. Residue S384 is modified to Phosphoserine; by AMPK.

This sequence belongs to the ATPase alpha/beta chains family. V-ATPase is a heteromultimeric enzyme made up of two complexes: the ATP-hydrolytic V1 complex and the proton translocation V0 complex. The V1 complex consists of three catalytic AB heterodimers that form a heterohexamer, three peripheral stalks each consisting of EG heterodimers, one central rotor including subunits D and F, and the regulatory subunits C and H. The proton translocation complex V0 consists of the proton transport subunit a, a ring of proteolipid subunits c9c'', rotary subunit d, subunits e and f, and the accessory subunits ATP6AP1/Ac45 and ATP6AP2/PRR. Interacts with the V0 complex V-ATPase subunit a4 ATP6V0A4. Interacts with WFS1. Interacts with alpha-crystallin B chain/CRYAB and with MTOR, forming a ternary complex. In terms of processing, phosphorylation at Ser-384 by AMPK down-regulates its enzyme activity.

The protein resides in the cytoplasm. The protein localises to the cytosol. It localises to the cytoplasmic vesicle. Its subcellular location is the secretory vesicle. It is found in the clathrin-coated vesicle membrane. The protein resides in the lysosome. It catalyses the reaction ATP + H2O + 4 H(+)(in) = ADP + phosphate + 5 H(+)(out). Its activity is regulated as follows. ATP hydrolysis occurs at the interface between the nucleotide-binding domains of subunits A and B. ATP hydrolysis triggers a conformational change in the subunits D and F, which induces a shift of subunit d. The c-ring is subsequently rotated and results in a continuous proton translocation across the membrane. Its function is as follows. Catalytic subunit of the V1 complex of vacuolar(H+)-ATPase (V-ATPase), a multisubunit enzyme composed of a peripheral complex (V1) that hydrolyzes ATP and a membrane integral complex (V0) that translocates protons. V-ATPase is responsible for acidifying and maintaining the pH of intracellular compartments and in some cell types, is targeted to the plasma membrane, where it is responsible for acidifying the extracellular environment. In aerobic conditions, involved in intracellular iron homeostasis, thus triggering the activity of Fe(2+) prolyl hydroxylase (PHD) enzymes, and leading to HIF1A hydroxylation and subsequent proteasomal degradation. May play a role in neurite development and synaptic connectivity. This Sus scrofa (Pig) protein is V-type proton ATPase catalytic subunit A (ATP6V1A).